Here is a 91-residue protein sequence, read N- to C-terminus: Small ribosomal subunit protein uS15 (91 aa).

Belongs to the universal ribosomal protein uS15 family. In terms of assembly, part of the 30S ribosomal subunit. Forms a bridge to the 50S subunit in the 70S ribosome, contacting the 23S rRNA.

Functionally, one of the primary rRNA binding proteins, it binds directly to 16S rRNA where it helps nucleate assembly of the platform of the 30S subunit by binding and bridging several RNA helices of the 16S rRNA. Its function is as follows. Forms an intersubunit bridge (bridge B4) with the 23S rRNA of the 50S subunit in the ribosome. This is Small ribosomal subunit protein uS15 from Legionella pneumophila (strain Paris).